A 251-amino-acid polypeptide reads, in one-letter code: tRNA (guanine-N(1)-)-methyltransferase (251 aa).

Residues glycine 122 and 142–147 (IGDYVL) contribute to the S-adenosyl-L-methionine site. The interval 226 to 251 (RARRPDLFATRPQPNRQKPPKNTTDG) is disordered. The segment covering 237 to 251 (PQPNRQKPPKNTTDG) has biased composition (polar residues).

It belongs to the RNA methyltransferase TrmD family. In terms of assembly, homodimer.

Its subcellular location is the cytoplasm. The catalysed reaction is guanosine(37) in tRNA + S-adenosyl-L-methionine = N(1)-methylguanosine(37) in tRNA + S-adenosyl-L-homocysteine + H(+). Its function is as follows. Specifically methylates guanosine-37 in various tRNAs. This Rhodopseudomonas palustris (strain BisB18) protein is tRNA (guanine-N(1)-)-methyltransferase.